The primary structure comprises 299 residues: Acetylglutamate kinase (299 aa).

Substrate-binding positions include 70–71 (GG), Arg92, and Asn197.

This sequence belongs to the acetylglutamate kinase family. ArgB subfamily.

Its subcellular location is the cytoplasm. It carries out the reaction N-acetyl-L-glutamate + ATP = N-acetyl-L-glutamyl 5-phosphate + ADP. The protein operates within amino-acid biosynthesis; L-arginine biosynthesis; N(2)-acetyl-L-ornithine from L-glutamate: step 2/4. Its function is as follows. Catalyzes the ATP-dependent phosphorylation of N-acetyl-L-glutamate. The protein is Acetylglutamate kinase of Acidiphilium cryptum (strain JF-5).